A 661-amino-acid polypeptide reads, in one-letter code: MSEGPIRVAPHPIAKRVKHGCKTPHVSHIDDYRSQHRETIGHESDKWWAKKAHELLYWDRPFHTVRSGSFENGDIAWFPEGGLNASYNCVDRWAFKHPEKTAIIYEADEPGEGREISYAELLREVCSIANVLKSFGVKKGDTVSVYLPMTWQAVAAFLACARIGAIHSVVFAGFSAEALRDRMQDCKSRVLITSDEGRRGGKAIATKAIADAALKECPAVEKVLVLKRTGNPVPWTEGRDVWWHEAVARVPRYCPPEVMASEDPLFILYTSGSTGKPKGVVHTTGGYLLCAALTVKYVFDVHPDDRFACMADVGWITGHTYIVYGPLAIGATTTVFESTPVYPTPSRYWETVEKYKLTQFYSAPTAIRLLRRLGHEHVNKHDLSSLRVLGSVGEPINPEAWHWYNEHVGKTECAIVDTFWQTETGSIVVTPFPGAIETKPGAATVPFFGIEPAILEPTTGKVLEGNDVEGVLTIAHPWPSIARTIYGDHQRYLETYMKPYPGYFYTGDGAARDEDGYIWIKGRVDDVINVSGHRLSTAEIESALITHTGVAETAVIGTADELTGQAVYAFVTLKPEFKFDAENEAGLSKELILQVRKIIGPFAAPKRIYIVSDLPKTRSGKIMRRILRKIVAGEADQLGDLSTFADPGIVEVIKEKVASAA.

Residues 199 to 202 (RGGK) and T317 contribute to the CoA site. ATP is bound by residues 393–395 (GEP), 417–422 (DTFWQT), D508, and R523. Position 531 (S531) interacts with CoA. R534 is an ATP binding site. R596 contacts CoA.

This sequence belongs to the ATP-dependent AMP-binding enzyme family.

The catalysed reaction is acetate + ATP + CoA = acetyl-CoA + AMP + diphosphate. In Coprinopsis cinerea (Inky cap fungus), this protein is Acetyl-coenzyme A synthetase (ACS-1).